Consider the following 210-residue polypeptide: Thymidylate kinase (210 aa).

Residue 11-18 (GVDGAGKT) coordinates ATP.

Belongs to the thymidylate kinase family.

It catalyses the reaction dTMP + ATP = dTDP + ADP. Functionally, phosphorylation of dTMP to form dTDP in both de novo and salvage pathways of dTTP synthesis. The polypeptide is Thymidylate kinase (tmk) (Mycoplasma genitalium (strain ATCC 33530 / DSM 19775 / NCTC 10195 / G37) (Mycoplasmoides genitalium)).